The chain runs to 409 residues: Tryptophan synthase beta chain (409 aa).

Lys86 carries the N6-(pyridoxal phosphate)lysine modification.

The protein belongs to the TrpB family. Tetramer of two alpha and two beta chains. Pyridoxal 5'-phosphate is required as a cofactor.

The enzyme catalyses (1S,2R)-1-C-(indol-3-yl)glycerol 3-phosphate + L-serine = D-glyceraldehyde 3-phosphate + L-tryptophan + H2O. It participates in amino-acid biosynthesis; L-tryptophan biosynthesis; L-tryptophan from chorismate: step 5/5. The beta subunit is responsible for the synthesis of L-tryptophan from indole and L-serine. The chain is Tryptophan synthase beta chain from Shewanella pealeana (strain ATCC 700345 / ANG-SQ1).